The chain runs to 549 residues: Glucose-6-phosphate isomerase (549 aa).

Lys80, Lys228, and Lys234 each carry N6-acetyllysine. Glu355 functions as the Proton donor in the catalytic mechanism. Active-site residues include His386 and Lys514.

The protein belongs to the GPI family.

It localises to the cytoplasm. It catalyses the reaction alpha-D-glucose 6-phosphate = beta-D-fructose 6-phosphate. It participates in carbohydrate biosynthesis; gluconeogenesis. Its pathway is carbohydrate degradation; glycolysis; D-glyceraldehyde 3-phosphate and glycerone phosphate from D-glucose: step 2/4. Catalyzes the reversible isomerization of glucose-6-phosphate to fructose-6-phosphate. This chain is Glucose-6-phosphate isomerase, found in Escherichia fergusonii (strain ATCC 35469 / DSM 13698 / CCUG 18766 / IAM 14443 / JCM 21226 / LMG 7866 / NBRC 102419 / NCTC 12128 / CDC 0568-73).